Consider the following 100-residue polypeptide: Small ribosomal subunit protein uS14c (100 aa).

Belongs to the universal ribosomal protein uS14 family. In terms of assembly, part of the 30S ribosomal subunit.

The protein resides in the plastid. The protein localises to the chloroplast. Its function is as follows. Binds 16S rRNA, required for the assembly of 30S particles. This is Small ribosomal subunit protein uS14c from Pisum sativum (Garden pea).